The following is a 98-amino-acid chain: NADH-ubiquinone oxidoreductase chain 4L (98 aa).

3 consecutive transmembrane segments (helical) span residues 1 to 21, 28 to 48, and 59 to 79; these read MMSI…GVLI, STLL…ALLI, and APLV…ALLV.

The protein belongs to the complex I subunit 4L family. In terms of assembly, core subunit of respiratory chain NADH dehydrogenase (Complex I) which is composed of 45 different subunits.

It localises to the mitochondrion inner membrane. The enzyme catalyses a ubiquinone + NADH + 5 H(+)(in) = a ubiquinol + NAD(+) + 4 H(+)(out). In terms of biological role, core subunit of the mitochondrial membrane respiratory chain NADH dehydrogenase (Complex I) which catalyzes electron transfer from NADH through the respiratory chain, using ubiquinone as an electron acceptor. Part of the enzyme membrane arm which is embedded in the lipid bilayer and involved in proton translocation. The chain is NADH-ubiquinone oxidoreductase chain 4L (MT-ND4L) from Pseudocheirus peregrinus (Common ring-tailed possum).